Consider the following 1036-residue polypeptide: Zinc finger protein 532 (1036 aa).

4 disordered regions span residues P26–G92, G106–S206, R220–K265, and A281–I362. The span at S32 to H52 shows a compositional bias: basic and acidic residues. Phosphoserine is present on residues S130, S133, and S134. Residues E136–D151 are compositionally biased toward acidic residues. K175 is subject to N6-acetyllysine. The span at E182–G193 shows a compositional bias: polar residues. Composition is skewed to basic and acidic residues over residues H194–E205 and R220–D249. The segment covering A253 to K265 has biased composition (low complexity). A compositionally biased stretch (basic and acidic residues) spans E302–P314. Residues S306 and S313 each carry the phosphoserine modification. Residues S336–S353 show a composition bias toward low complexity. S433 bears the Phosphoserine mark. Residues K458 and K515 each participate in a glycyl lysine isopeptide (Lys-Gly) (interchain with G-Cter in SUMO2) cross-link. A C2H2-type 1; degenerate zinc finger spans residues Y615–Y634. The C2H2-type 2; degenerate zinc finger occupies L751–D775. A C2H2-type 3 zinc finger spans residues H784 to H807. A C2H2-type 4; degenerate zinc finger spans residues Y814–H840. Positions V847–K877 are disordered. Residues D852–I867 show a composition bias toward acidic residues. Over residues K868 to K877 the composition is skewed to basic and acidic residues. Residue S875 is modified to Phosphoserine. Glycyl lysine isopeptide (Lys-Gly) (interchain with G-Cter in SUMO2) cross-links involve residues K879 and K902. 2 C2H2-type zinc fingers span residues H938–H961 and R999–H1021. Residues P966–K1000 are disordered.

It belongs to the krueppel C2H2-type zinc-finger protein family.

The protein resides in the nucleus. May be involved in transcriptional regulation. The protein is Zinc finger protein 532 (Znf532) of Mus musculus (Mouse).